We begin with the raw amino-acid sequence, 723 residues long: CSC1-like protein ERD4 (723 aa).

Topologically, residues 1–5 (MEFAS) are cytoplasmic. Residues 6-26 (FLVSLGTSAIIFVVLMFLFTW) form a helical membrane-spanning segment. Topologically, residues 27-90 (LSRRPGNVPV…TAVYFVFQST (64 aa)) are extracellular. A helical transmembrane segment spans residues 91-111 (VLGIFALSALLLLPTLLPIAA). The Cytoplasmic portion of the chain corresponds to 112-148 (TDNNLETSRSATDTTSNGTFSQLDNLSMANITKSSSR). A helical membrane pass occupies residues 149 to 169 (LWAFLGAVYWVSVVTYFMLWK). Over 170–364 (AYKHVAALRA…IKFFSRIVRQ (195 aa)) the chain is Extracellular. A helical membrane pass occupies residues 365–385 (YVIYFLVAITILFYMIPIAFV). Over 386–416 (SAITTLANLQKALPFLKPIVDIAFIRTILES) the chain is Cytoplasmic. The helical transmembrane segment at 417 to 437 (YLPQIALIVFLAMLPKFLMFL) threads the bilayer. Residues 438–456 (SKSEGIPSQSHAIRATSGK) are Extracellular-facing. A helical transmembrane segment spans residues 457 to 477 (YFYFSVLNVFIGVTLAGSLFE). Over 478-508 (NLKALEEKPNSFITLLATSLPKSATFFLTYV) the chain is Cytoplasmic. The chain crosses the membrane as a helical span at residues 509-529 (ALKFFVGYGLELSRIIPLIIF). Residues 530–572 (HLKKKYLCKTEAEVKEAWYPGDLSYATRVPSDMLILTITFCYS) are Extracellular-facing. A helical transmembrane segment spans residues 573–593 (VIAPLILVFGVIYFGLGWLIL). Residues 594-614 (RNQALKVYVPSYESYGRMWPH) are Cytoplasmic-facing. A helical membrane pass occupies residues 615–635 (IHTRILAALFLFQLVMFGYLG). At 636–637 (VK) the chain is on the extracellular side. Residues 638–658 (IFVWAILLVPLIFISLIFGYV) traverse the membrane as a helical segment. At 659–723 (CRQKFYGGFE…YQDYAAISAA (65 aa)) the chain is on the cytoplasmic side.

The protein belongs to the CSC1 (TC 1.A.17) family.

Its subcellular location is the plastid. It is found in the chloroplast membrane. Functionally, acts as an osmosensitive calcium-permeable cation channel. This chain is CSC1-like protein ERD4 (ERD4), found in Brassica juncea (Indian mustard).